The chain runs to 199 residues: Protein GrpE (199 aa).

Basic and acidic residues predominate over residues 1 to 10 (MTNQTEKEQV). Residues 1–44 (MTNQTEKEQVEQDVSQATELAQEAQEAQTQDVEPELQQNNEIDP) are disordered. The segment covering 16-30 (QATELAQEAQEAQTQ) has biased composition (low complexity).

It belongs to the GrpE family. In terms of assembly, homodimer.

The protein localises to the cytoplasm. Its function is as follows. Participates actively in the response to hyperosmotic and heat shock by preventing the aggregation of stress-denatured proteins, in association with DnaK and GrpE. It is the nucleotide exchange factor for DnaK and may function as a thermosensor. Unfolded proteins bind initially to DnaJ; upon interaction with the DnaJ-bound protein, DnaK hydrolyzes its bound ATP, resulting in the formation of a stable complex. GrpE releases ADP from DnaK; ATP binding to DnaK triggers the release of the substrate protein, thus completing the reaction cycle. Several rounds of ATP-dependent interactions between DnaJ, DnaK and GrpE are required for fully efficient folding. The protein is Protein GrpE of Glaesserella parasuis serovar 5 (strain SH0165) (Haemophilus parasuis).